A 1292-amino-acid polypeptide reads, in one-letter code: Epidermal growth factor receptor (1292 aa).

The Extracellular portion of the chain corresponds to Met-1–Pro-641. N-linked (GlcNAc...) asparagine glycans are attached at residues Asn-31, Asn-224, Asn-263, Asn-323, Asn-342, Asn-600, and Asn-605. Residues Ala-642–Met-662 form a helical membrane-spanning segment. The Cytoplasmic segment spans residues Tyr-663–Val-1292. Thr-675 is subject to Phosphothreonine; by PKC. Residues Met-711–Leu-978 enclose the Protein kinase domain. ATP-binding positions include Leu-717–Val-725 and Lys-744. The Proton acceptor role is filled by Asp-836. A disordered region spans residues Pro-1022–Gln-1066. A Phosphotyrosine; by autocatalysis modification is found at Tyr-1166. The disordered stretch occupies residues Ser-1253 to Val-1292. Over residues Arg-1258–Val-1292 the composition is skewed to basic and acidic residues.

This sequence belongs to the protein kinase superfamily. Tyr protein kinase family. EGF receptor subfamily.

Its subcellular location is the membrane. The catalysed reaction is L-tyrosyl-[protein] + ATP = O-phospho-L-tyrosyl-[protein] + ADP + H(+). With respect to regulation, activated by MRJP1 during queen determination of honeybee larvae. Upon binding to its ligands, transduces the signal through the ras-raf-MAPK pathway and is involved in a myriad of developmental decisions. Involved in the determination of adult size, ovary development, and development timing, especially during queen determination of honeybee larvae. May have an important role in the prolongation of longevity in queens. This Apis mellifera (Honeybee) protein is Epidermal growth factor receptor (Egfr).